The primary structure comprises 349 residues: N-acetyltaurine hydrolase (349 aa).

A divalent metal cation contacts are provided by H26, H28, E169, H201, H230, and D298.

This sequence belongs to the metallo-dependent hydrolases superfamily. Phosphotriesterase family. The cofactor is a divalent metal cation.

The protein resides in the cytoplasm. Its subcellular location is the cytosol. It catalyses the reaction N-acetyltaurine + H2O = taurine + acetate. The enzyme catalyses N-propanoyltaurine + H2O = propanoate + taurine. It carries out the reaction N-acetyl-L-methionine + H2O = L-methionine + acetate. The catalysed reaction is N-acetyl-L-isoleucine + H2O = L-isoleucine + acetate. It catalyses the reaction N-acetyl-L-leucine + H2O = L-leucine + acetate. The enzyme catalyses N-acetyl-L-valine + H2O = L-valine + acetate. N-acetyltaurine hydrolase that regulates feeding by catalyzing the hydrolysis of N-acetyltaurine into taurine and acetate. N-acetyltaurine has anorexigenic and anti-obesity effects that are dependent on GFRAL receptor and GDF15. PTER also acts on other N-acetyl amino acids (Met, Ile, Leu, Val) and N-propionyltaurine, but at lower rates. The chain is N-acetyltaurine hydrolase from Homo sapiens (Human).